The primary structure comprises 179 residues: Negative modulator of initiation of replication (179 aa).

This sequence belongs to the SeqA family. Homodimer. Polymerizes to form helical filaments.

The protein resides in the cytoplasm. Negative regulator of replication initiation, which contributes to regulation of DNA replication and ensures that replication initiation occurs exactly once per chromosome per cell cycle. Binds to pairs of hemimethylated GATC sequences in the oriC region, thus preventing assembly of replication proteins and re-initiation at newly replicated origins. Repression is relieved when the region becomes fully methylated. This chain is Negative modulator of initiation of replication, found in Vibrio atlanticus (strain LGP32) (Vibrio splendidus (strain Mel32)).